We begin with the raw amino-acid sequence, 199 residues long: Protein OPI10 homolog (199 aa).

Belongs to the OPI10 family.

In Aedes aegypti (Yellowfever mosquito), this protein is Protein OPI10 homolog.